Reading from the N-terminus, the 264-residue chain is Exodeoxyribonuclease YycJ (264 aa).

His58, His60, Asp62, His63, and Asp145 together coordinate a divalent metal cation.

Belongs to the metallo-beta-lactamase superfamily. Fe(2+) is required as a cofactor. Requires Zn(2+) as cofactor. The cofactor is Mn(2+).

In terms of biological role, 5'-&gt;3' double-stranded DNA exonuclease. May play a role in mutation mismatch repair (MMR). Required for accurate coordination of cell division with DNA replication. May play a role in cell wall metabolism. This is Exodeoxyribonuclease YycJ from Bacillus anthracis.